The following is a 291-amino-acid chain: ATP phosphoribosyltransferase (291 aa).

The protein belongs to the ATP phosphoribosyltransferase family. Long subfamily. Requires Mg(2+) as cofactor.

It is found in the cytoplasm. The catalysed reaction is 1-(5-phospho-beta-D-ribosyl)-ATP + diphosphate = 5-phospho-alpha-D-ribose 1-diphosphate + ATP. It participates in amino-acid biosynthesis; L-histidine biosynthesis; L-histidine from 5-phospho-alpha-D-ribose 1-diphosphate: step 1/9. With respect to regulation, feedback inhibited by histidine. Functionally, catalyzes the condensation of ATP and 5-phosphoribose 1-diphosphate to form N'-(5'-phosphoribosyl)-ATP (PR-ATP). Has a crucial role in the pathway because the rate of histidine biosynthesis seems to be controlled primarily by regulation of HisG enzymatic activity. In Geotalea daltonii (strain DSM 22248 / JCM 15807 / FRC-32) (Geobacter daltonii), this protein is ATP phosphoribosyltransferase.